Consider the following 160-residue polypeptide: Putative flagellin YvzB (160 aa).

This sequence belongs to the bacterial flagellin family. As to quaternary structure, interacts with FliW.

The protein localises to the bacterial flagellum. The chain is Putative flagellin YvzB (yvzB) from Bacillus subtilis (strain 168).